Consider the following 567-residue polypeptide: Phosphoglucomutase-like protein 5 (567 aa).

The segment at 1–26 (MEGSPIPVLTVPTAPYEDQRPTGGGG) is disordered. Phosphothreonine is present on Thr-120. Ser-122 is modified (phosphoserine).

Belongs to the phosphohexose mutase family. Interacts with DMD/dystrophin; the interaction is direct. Interacts with UTRN/utrophin.

The protein localises to the cell junction. The protein resides in the adherens junction. It is found in the cytoplasm. Its subcellular location is the cytoskeleton. It localises to the cell membrane. The protein localises to the sarcolemma. Functionally, component of adherens-type cell-cell and cell-matrix junctions. Has no phosphoglucomutase activity in vitro. In Rattus norvegicus (Rat), this protein is Phosphoglucomutase-like protein 5.